Here is a 174-residue protein sequence, read N- to C-terminus: Methylated-DNA--protein-cysteine methyltransferase (174 aa).

Cys144 acts as the Nucleophile; methyl group acceptor in catalysis.

Belongs to the MGMT family.

The protein localises to the cytoplasm. It catalyses the reaction a 6-O-methyl-2'-deoxyguanosine in DNA + L-cysteinyl-[protein] = S-methyl-L-cysteinyl-[protein] + a 2'-deoxyguanosine in DNA. The enzyme catalyses a 4-O-methyl-thymidine in DNA + L-cysteinyl-[protein] = a thymidine in DNA + S-methyl-L-cysteinyl-[protein]. Functionally, involved in the cellular defense against the biological effects of O6-methylguanine (O6-MeG) and O4-methylthymine (O4-MeT) in DNA. Repairs the methylated nucleobase in DNA by stoichiometrically transferring the methyl group to a cysteine residue in the enzyme. This is a suicide reaction: the enzyme is irreversibly inactivated. This chain is Methylated-DNA--protein-cysteine methyltransferase, found in Pyrococcus furiosus (strain ATCC 43587 / DSM 3638 / JCM 8422 / Vc1).